We begin with the raw amino-acid sequence, 644 residues long: Exoribonuclease 2 (644 aa).

The RNB domain maps to 189–516 (REDLTALDFV…NHRLLKAVIK (328 aa)). The S1 motif domain maps to 561–643 (DTRFAAEIVD…ETRSIIARPV (83 aa)).

Belongs to the RNR ribonuclease family. RNase II subfamily.

It is found in the cytoplasm. It catalyses the reaction Exonucleolytic cleavage in the 3'- to 5'-direction to yield nucleoside 5'-phosphates.. In terms of biological role, involved in mRNA degradation. Hydrolyzes single-stranded polyribonucleotides processively in the 3' to 5' direction. In Escherichia coli (strain SMS-3-5 / SECEC), this protein is Exoribonuclease 2.